The chain runs to 296 residues: Cytidine deaminase (296 aa).

CMP/dCMP-type deaminase domains lie at 52–172 and 191–296; these read TAVE…FGPK and THAD…YFAL. Position 93–95 (93–95) interacts with substrate; it reads NQE. His-106 is a Zn(2+) binding site. Glu-108 (proton donor) is an active-site residue. Residues Cys-133 and Cys-136 each contribute to the Zn(2+) site.

It belongs to the cytidine and deoxycytidylate deaminase family. Homodimer. Zn(2+) serves as cofactor.

It catalyses the reaction cytidine + H2O + H(+) = uridine + NH4(+). The enzyme catalyses 2'-deoxycytidine + H2O + H(+) = 2'-deoxyuridine + NH4(+). Its function is as follows. This enzyme scavenges exogenous and endogenous cytidine and 2'-deoxycytidine for UMP synthesis. The chain is Cytidine deaminase from Actinobacillus succinogenes (strain ATCC 55618 / DSM 22257 / CCUG 43843 / 130Z).